Reading from the N-terminus, the 403-residue chain is MAYLRRAATALVLIFQLHLFLSLSNAHNITRILAKDPDFSTFNHYLSATHLADEINRRQTITVLAVDNSAMSSILSNGYSLYQIRNILSLHVLVDYFGTKKLHQITDGSTSTASMFQSTGSATGTSGYINITDIKGGKVAFGVQDDDSKLTAHYVKSVFEKPYNISVLHISQVLTSPEAEAPTASPSDLILTTILEKQGCKAFSDILKSTGADKTFQDTVDGGLTVFCPSDSAVGKFMPKFKSLSPANKTALVLYHGMPVYQSLQMLRSGNGAVNTLATEGNNKFDFTVQNDGEDVTLETDVVTAKVMGTLKDQEPLIVYKIDKVLLPREIYKAVKTSAPAPKSSKKKPKNAEADADGPSADAPSDDDVEVADDKNGAVSAMITRTSNVVTAIVGLCFGVWLM.

The N-terminal stretch at 1-26 is a signal peptide; that stretch reads MAYLRRAATALVLIFQLHLFLSLSNA. FAS1 domains lie at 27–174 and 187–326; these read HNIT…SQVL and SDLI…DKVL. Residues asparagine 28, asparagine 130, asparagine 164, and asparagine 248 are each glycosylated (N-linked (GlcNAc...) asparagine). The tract at residues 338–371 is disordered; sequence SAPAPKSSKKKPKNAEADADGPSADAPSDDDVEV. Alanine 378 carries GPI-anchor amidated alanine lipidation. Positions 379–403 are cleaved as a propeptide — removed in mature form; the sequence is VSAMITRTSNVVTAIVGLCFGVWLM.

This sequence belongs to the fasciclin-like AGP family. In terms of tissue distribution, expressed mainly in flowers and to a lesser extent in leaves and roots.

It is found in the cell membrane. May be a cell surface adhesion protein. The chain is Fasciclin-like arabinogalactan protein 2 (FLA2) from Arabidopsis thaliana (Mouse-ear cress).